The following is a 1580-amino-acid chain: Dynamin-binding protein (1580 aa).

M1 carries the post-translational modification N-acetylmethionine. SH3 domains follow at residues 2 to 61 (EPGS…IVTI), 66 to 127 (EGER…ELCL), and 146 to 205 (YSLG…LLGP). 4 disordered regions span residues 211–245 (ESVN…DQQS), 304–446 (NRTE…LVPL), 500–546 (YAQK…DSLD), and 589–688 (RGSS…AQTF). A compositionally biased stretch (acidic residues) spans 229–243 (VPPEEAESGGDEDDQ). The SH3 4 domain occupies 244-303 (QSGTYGIALYRFQALETNELDFEVGDRIQILGTLEDGWLEGCLKGKTGVFPHRFVKLCPS). Polar residues-rich tracts occupy residues 422–439 (QKSQ…TSDP) and 502–513 (QKHQTSTENTAS). The segment covering 516 to 527 (DPPERPERRPGL) has biased composition (basic and acidic residues). Positions 608-617 (RPPPPRPRTP) are enriched in pro residues. Over residues 671-682 (APEKEDSEHMEK) the composition is skewed to basic and acidic residues. S683 is subject to Phosphoserine. Residues 694 to 755 (LARIRDVEQD…LELQQLRDMT (62 aa)) are a coiled coil. Residues 783 to 970 (KRAKVVAELL…KEINVNINEY (188 aa)) form the DH domain. The region spanning 1011 to 1220 (LKHLTGFAPQ…LKATDREGNL (210 aa)) is the BAR domain. Residues 1288–1351 (PPEKLFHVQR…YSSFLKPYNP (64 aa)) form the SH3 5 domain. A compositionally biased stretch (low complexity) spans 1356 to 1365 (SDASVASHSS). Disordered regions lie at residues 1356-1384 (SDAS…NSHS) and 1426-1514 (TGHP…GSSE). The segment covering 1426–1440 (TGHPETGPSTCSSDP) has biased composition (polar residues). An SH3 6 domain is found at 1516 to 1579 (EGNQVYFAIY…PSNYIRKTEY (64 aa)).

Binds DNM1 via its N-terminal SH3 domains. The C-terminal SH3 domain binds a complex containing actin, tubulin, Hsp70 and actin-regulatory proteins, such as ENAH, EVL, WIRE, CR16, WAVE1 and NAP1L1. Interacts with FASLG. Interacts (via SH3 domain 6) with WASL. Interacts (via SH3 domain 6) interacts with ENAH. Interacts (via C-terminal domain) with TJP1; required for the apical cell-cell junction localization of DNMBP.

The protein localises to the cytoplasm. Its subcellular location is the golgi apparatus. The protein resides in the golgi stack. It localises to the cytoskeleton. It is found in the synapse. The protein localises to the cell junction. Functionally, plays a critical role as a guanine nucleotide exchange factor (GEF) for CDC42 in several intracellular processes associated with the actin and microtubule cytoskeleton. Regulates the structure of apical junctions in epithelial cells. Participates in the normal lumenogenesis of epithelial cell cysts by regulating spindle orientation. Plays a role in ciliogenesis. May play a role in membrane trafficking between the cell surface and the Golgi. The chain is Dynamin-binding protein from Mus musculus (Mouse).